The chain runs to 476 residues: Zinc metalloproteinase/disintegrin (476 aa).

The first 20 residues, 1 to 20, serve as a signal peptide directing secretion; the sequence is MIQVLLVIICLADFPYQGTS. The propeptide occupies 21–184; sequence IILESGNVND…KSDEPIKASQ (164 aa). The residue at position 185 (Q185) is a Pyrrolidone carboxylic acid. The region spanning 191-387 is the Peptidase M12B domain; it reads RYIELVVVAD…RNPQCILNEP (197 aa). Positions 194 and 278 each coordinate Ca(2+). 3 disulfides stabilise this stretch: C302–C382, C342–C366, and C344–C349. A Zn(2+)-binding site is contributed by H327. E328 is an active-site residue. Positions 331 and 337 each coordinate Zn(2+). Residues C382 and N385 each coordinate Ca(2+). A propeptide spanning residues 388–403 is cleaved from the precursor; sequence LRTDTVSTPVSGNELL. In terms of domain architecture, Disintegrin spans 395–476; sequence TPVSGNELLE…AGCPRNGFYG (82 aa). 6 disulfides stabilise this stretch: C409/C424, C411/C419, C418/C441, C432/C438, C437/C462, and C450/C469. The Cell attachment site motif lies at 454–456; the sequence is KGD.

It belongs to the venom metalloproteinase (M12B) family. P-II subfamily. P-IId sub-subfamily. As to quaternary structure, homodimer; disulfide-linked (disintegrin). Zn(2+) is required as a cofactor. In terms of tissue distribution, expressed by the venom gland.

Its subcellular location is the secreted. With respect to regulation, the metalloproteinase is inhibited by EDTA, o-phenanthroline, and cysteine. Glutathione does not inhibit the enzymatic activity. Shows weak degradation of alpha-fibrinogen, but has no activity on beta- and gamma-chains. Digests luteinizing hormone-releasing hormone (LH-RH) and oxidized insulin at X-Leu, X-Phe, and X-Val bonds as well as X-His bond. Does not show fibrinogen-clotting activity. Does not show hemorrhagic activity. Its function is as follows. Inhibits ADP-induced platelet aggregation. The sequence is that of Zinc metalloproteinase/disintegrin from Gloydius brevicauda (Korean slamosa snake).